The sequence spans 341 residues: Glucokinase (341 aa).

18–23 (GDIGGT) contacts ATP.

This sequence belongs to the bacterial glucokinase family.

It localises to the cytoplasm. The catalysed reaction is D-glucose + ATP = D-glucose 6-phosphate + ADP + H(+). The protein is Glucokinase of Rhizobium leguminosarum bv. trifolii (strain WSM2304).